A 182-amino-acid polypeptide reads, in one-letter code: Ribosome-recycling factor (182 aa).

The segment at 136–160 (VKKSEKDGDLSEDQSRDEQETIQKE) is disordered.

Belongs to the RRF family.

The protein resides in the cytoplasm. In terms of biological role, responsible for the release of ribosomes from messenger RNA at the termination of protein biosynthesis. May increase the efficiency of translation by recycling ribosomes from one round of translation to another. The chain is Ribosome-recycling factor from Prochlorococcus marinus (strain NATL2A).